Consider the following 735-residue polypeptide: Catalase-peroxidase (735 aa).

A cross-link (tryptophyl-tyrosyl-methioninium (Trp-Tyr) (with M-249)) is located at residues 95-223 (WHSAGTYRTG…LAAVQMGLIY (129 aa)). Catalysis depends on His96, which acts as the Proton acceptor. Positions 223 to 249 (YVNPEGPDGVPDPIKSGIDIRETFARM) form a cross-link, tryptophyl-tyrosyl-methioninium (Tyr-Met) (with W-95). Residue His264 coordinates heme b.

It belongs to the peroxidase family. Peroxidase/catalase subfamily. As to quaternary structure, homodimer or homotetramer. Heme b is required as a cofactor. Formation of the three residue Trp-Tyr-Met cross-link is important for the catalase, but not the peroxidase activity of the enzyme.

It carries out the reaction H2O2 + AH2 = A + 2 H2O. The enzyme catalyses 2 H2O2 = O2 + 2 H2O. In terms of biological role, bifunctional enzyme with both catalase and broad-spectrum peroxidase activity. The polypeptide is Catalase-peroxidase (Aliarcobacter butzleri (strain RM4018) (Arcobacter butzleri)).